Here is a 232-residue protein sequence, read N- to C-terminus: tRNA (guanine-N(1)-)-methyltransferase (232 aa).

S-adenosyl-L-methionine contacts are provided by residues glycine 108 and 128–133 (IGDFIM).

The protein belongs to the RNA methyltransferase TrmD family. In terms of assembly, homodimer.

It is found in the cytoplasm. It carries out the reaction guanosine(37) in tRNA + S-adenosyl-L-methionine = N(1)-methylguanosine(37) in tRNA + S-adenosyl-L-homocysteine + H(+). Functionally, specifically methylates guanosine-37 in various tRNAs. This chain is tRNA (guanine-N(1)-)-methyltransferase, found in Campylobacter fetus subsp. fetus (strain 82-40).